Consider the following 567-residue polypeptide: Adenine deaminase (567 aa).

The protein belongs to the metallo-dependent hydrolases superfamily. Adenine deaminase family. Mn(2+) serves as cofactor.

The enzyme catalyses adenine + H2O + H(+) = hypoxanthine + NH4(+). This is Adenine deaminase from Methanothrix thermoacetophila (strain DSM 6194 / JCM 14653 / NBRC 101360 / PT) (Methanosaeta thermophila).